Consider the following 258-residue polypeptide: MGRGKVELKRIENKINRQVTFAKRRNGLLKKAYELSVLCDAEIALLIFSNRGKLYEFCSSPSGMARTVDKYRKHSYATMDPNQSAKDLQDKYQDYLKLKSRVEILQHSQRHLLGEELSEMDVNELEHLERQVDASLRQIRSTKARSMLDQLSDLKTKEEMLLETNRDLRRKLEDSDAALTQSFWGSSAAEQQQQHQQQQQGMSSYQSNPPIQEAGFFKPLQGNVALQMSSHYNHNPANATNSATTSQNVNGFFPGWMV.

One can recognise an MADS-box domain in the interval 3-57; it reads RGKVELKRIENKINRQVTFAKRRNGLLKKAYELSVLCDAEIALLIFSNRGKLYEF. The region spanning 88–178 is the K-box domain; sequence LQDKYQDYLK…RRKLEDSDAA (91 aa). The interval 186–214 is disordered; that stretch reads SSAAEQQQQHQQQQQGMSSYQSNPPIQEA. A compositionally biased stretch (low complexity) spans 191–200; that stretch reads QQQQHQQQQQ. Positions 201–210 are enriched in polar residues; the sequence is GMSSYQSNPP.

As to quaternary structure, forms homodimers. Interacts with TT16/AGL32. As to expression, expressed in aerial vegetative organs and flowers, but not in roots. Expressed in flower primordia.

The protein resides in the nucleus. Functionally, probable transcription factor that binds specifically to the CArG box DNA sequence 5'-CC (A/T)6 GG-3'. Plays an important role in the determination of flower meristem identity. Involved in the specification of sepal identity. Contributes to the development of petals, stamens and carpels. The chain is Agamous-like MADS-box protein AGL3 (AGL3) from Arabidopsis thaliana (Mouse-ear cress).